Reading from the N-terminus, the 307-residue chain is GTPase Era (307 aa).

The Era-type G domain maps to 7 to 181 (RCGWVALLGP…VKLVKSKLPV (175 aa)). The interval 15–22 (GPPNAGKS) is G1. 15-22 (GPPNAGKS) provides a ligand contact to GTP. The G2 stretch occupies residues 41-45 (QTTRN). A G3 region spans residues 62-65 (DTPG). GTP-binding positions include 62–66 (DTPGI) and 130–133 (NKVD). The interval 130 to 133 (NKVD) is G4. The G5 stretch occupies residues 160–162 (VSA). The 79-residue stretch at 212 to 290 (LRQELPYSVA…HLELWVKVRE (79 aa)) folds into the KH type-2 domain.

The protein belongs to the TRAFAC class TrmE-Era-EngA-EngB-Septin-like GTPase superfamily. Era GTPase family. Monomer.

The protein resides in the cytoplasm. The protein localises to the cell inner membrane. Its function is as follows. An essential GTPase that binds both GDP and GTP, with rapid nucleotide exchange. Plays a role in 16S rRNA processing and 30S ribosomal subunit biogenesis and possibly also in cell cycle regulation and energy metabolism. The chain is GTPase Era from Nitratidesulfovibrio vulgaris (strain DSM 19637 / Miyazaki F) (Desulfovibrio vulgaris).